The sequence spans 350 residues: m7GpppX diphosphatase (350 aa).

An N-acetylserine modification is found at Ser-2. Phosphoserine is present on Ser-60. Position 66 is a phosphothreonine (Thr-66). Thr-66 carries the post-translational modification Phosphothreonine; by YAK1. Tyr-70 carries the phosphotyrosine modification. Residue Thr-120 is modified to Phosphothreonine. Substrate-binding positions include Glu-171, Lys-196, and 259 to 270 (HYQPSYYHFHIH). The Histidine triad motif signature appears at 266 to 270 (HFHIH). The active-site Nucleophile is His-268.

The protein belongs to the HIT family. As to quaternary structure, homodimer. Forms heterodimer with DCS2; the interaction inhibits the DCS1 scavenger decapping activity during post-diauxic growth. Phosphorylated. Phosphorylation occurs upon glucose deprivation.

It is found in the cytoplasm. The protein localises to the perinuclear region. The protein resides in the P-body. It catalyses the reaction a 5'-end (N(7)-methyl 5'-triphosphoguanosine)-ribonucleoside in mRNA + H2O = N(7)-methyl-GMP + a 5'-end diphospho-ribonucleoside in mRNA + 2 H(+). The hydrolytic product 7-methylguanosine diphosphate (m7GDP) efficiently inhibits the decapping scavenger activity and acts as a competitive inhibitor in vitro. Decapping scavenger enzyme that catalyzes the cleavage of a residual cap structure following the degradation of mRNAs by the 3'-&gt;5' exosome-mediated mRNA decay pathway. Hydrolyzes cap analog structures like 7-methylguanosine nucleoside triphosphate (m7GpppG) and tri-methyl guanosine nucleoside triphosphate (m3(2,2,7)GpppG) with up to 10 nucleotide substrates (small capped oligoribonucleotides) and specifically releases 5'-phosphorylated RNA fragments and 7-methylguanosine monophosphate (m7GMP) or tri-methyl guanosine nucleoside monophosphate (m3(2,2,7)GMP), respectively. Does not hydrolyze unmethylated cap analog (GpppG) and shows no decapping activity on intact m7GpppG-capped mRNA molecules longer than 25 nucleotides. Does not hydrolyze 7-methylguanosine diphosphate (m7GDP) and tri-methylguanosine diphosphate (m3(2,2,7)GDP) to (m(7)GMP) and m3(2,2,7)GMP, respectively. May also play a role in the 5'-&gt;3 mRNA decay pathway; m7GDP, the downstream product released by the 5'-&gt;3' mRNA mediated decapping activity, may be also converted by DCS1 to m7GMP. Binds to m7GpppG and strongly to m7GDP. May also regulate the 5'-&gt;3' exoribonucleolytic mRNA decay pathway in a cap-independent manner. Negatively regulates trehalase activity. The polypeptide is m7GpppX diphosphatase (Saccharomyces cerevisiae (strain ATCC 204508 / S288c) (Baker's yeast)).